The sequence spans 176 residues: Ribosome rescue factor SmrB (176 aa).

In terms of domain architecture, Smr spans 93 to 168; the sequence is LDLHGYRQSE…GDAALLVLID (76 aa).

This sequence belongs to the SmrB family. Associates with collided ribosomes, but not with correctly translating polysomes.

Functionally, acts as a ribosome collision sensor. Detects stalled/collided disomes (pairs of ribosomes where the leading ribosome is stalled and a second ribosome has collided with it) and endonucleolytically cleaves mRNA at the 5' boundary of the stalled ribosome. Stalled/collided disomes form a new interface (primarily via the 30S subunits) that binds SmrB. Cleaved mRNA becomes available for tmRNA ligation, leading to ribosomal subunit dissociation and rescue of stalled ribosomes. This is Ribosome rescue factor SmrB from Shewanella sp. (strain ANA-3).